Consider the following 143-residue polypeptide: Antiholin-like protein LrgA (143 aa).

Transmembrane regions (helical) follow at residues 6 to 26 (VYSF…SNII), 30 to 50 (LPIP…LLCL), 61 to 81 (LGTA…ISVI), and 97 to 117 (VIVV…QFIL).

It belongs to the CidA/LrgA family. LrgA subfamily.

It is found in the cell membrane. Its function is as follows. Inhibits the expression or activity of extracellular murein hydrolases by interacting, possibly with LrgB, with the holin-like protein CidA. The LrgAB and CidA proteins may affect the proton motive force of the membrane. May be involved in programmed cell death (PCD), possibly triggering PCD in response to antibiotics and environmental stresses. This is Antiholin-like protein LrgA from Bacillus anthracis (strain A0248).